A 1358-amino-acid chain; its full sequence is MSRQSTLYSFFPKSPALGDTKKAAAEASRQGAAASGASASRGGDAAWSEAEPGSRSAAVSASSPEAKDLNGGLRRASSSAQAVPPSSCDFSPGDLVWAKMEGYPWWPCLVYNHPFDGTFIRKKGKSVRVHVQFFDDSPTRGWVSKRMLKPYTGSKSKEAQKGGHFYSSKSEILRAMQRADEALSKDTAERLQLAVCDEPSEPEEEEETEVHEAYLSDKSEEDNYNESEEEAQPSVQGPRRSSRQVKKRRVISDSESDIGGSDVEFKPDTKQEGSSDDASSGVGDSDSEDLGTFGKGAPKRKRAMVAQGGLRRKSLKKETGSAKRATPILSETKSTLSAFSAPQNSESQTHVSGGGNDSSGPTVWYHETLEWLKPEKRRDEHRRRPDHPEFNPTTLYVPEEFLNSCTPGMRKWWQLKSQNFDLVIFYKVGKFYELYHMDAVIGVSELGLIFMKGNWAHSGFPEIAFGRFSDSLVQKGYKVARVEQTETPEMMEARCRKMAHVSKFDRVVRREICRIITKGTQTYSVLDGDPSENYSRYLLSLKEKEEETSGHTRVYGVCFVDTSLGKFFIGQFSDDRHCSRFRTLVAHYPPVQILFEKGNLSTETKTVLKGSLSSCLQEGLIPGSQFWDATKTLRTLLEGGYFTGNGDSSTVLPLVLKGMTSESDSVGLTPGEESELALSALGGIVFYLKKCLIDQELLSMANFEEYFPLDSDTVSTVKPGAVFTKASQRMVLDAVTLNNLEIFLNGTNGSTEGTLLERLDTCHTPFGKRLLKQWLCAPLCSPSAISDRLDAVEDLMAVPDKVTEVADLLKKLPDLERLLSKIHNVGSPLKSQNHPDSRAIMYEETTYSKKKIIDFLSALEGFKVMCKVSGLLEEVAGGFTSKTLKQVVTLQSKSPKGRFPDLTAELQRWDTAFDHEKARKTGLITPKAGFDSDYDQALADIRENEQSLLEYLDKQRSRLGCKSIVYWGIGRNRYQLEIPENFATRNLPEEYELKSTKKGCKRYWTKTIEKKLANLINAEERRDTSLKDCMRRLFCNFDKNHKDWQSAVECIAVLDVLLCLANYSQGGDGPMCRPEIVLPGEDTHPFLEFKGSRHPCITKTFFGDDFIPNDILIGCEEEAEEHGKAYCVLVTGPNMGGKSTLIRQAGLLAVMAQLGCYVPAEKCRLTPVDRVFTRLGASDRIMSGESTFFVELSETASILRHATAHSLVLVDELGRGTATFDGTAIANAVVKELAETIKCRTLFSTHYHSLVEDYSKSVCVRLGHMACMVENECEDPSQETITFLYKFIKGACPKSYGFNAARLANLPEEVIQKGHRKAREFERMNQSLQLFREVCLATEKPTINGEAIHRLLALINGL.

A disordered region spans residues 1 to 87 (MSRQSTLYSF…SSAQAVPPSS (87 aa)). Ser-14, Ser-38, and Ser-40 each carry phosphoserine. Low complexity predominate over residues 25-46 (AEASRQGAAASGASASRGGDAA). Lys-67 carries the N6-acetyllysine modification. A compositionally biased stretch (low complexity) spans 76 to 87 (ASSSAQAVPPSS). 5 positions are modified to phosphoserine: Ser-91, Ser-137, Ser-200, Ser-219, and Ser-227. Positions 92–154 (PGDLVWAKME…KRMLKPYTGS (63 aa)) constitute a PWWP domain. The tract at residues 197 to 360 (DEPSEPEEEE…VSGGGNDSSG (164 aa)) is disordered. Acidic residues-rich tracts occupy residues 198-209 (EPSEPEEEEETE) and 219-231 (SEED…EEEA). Residues 240–249 (RSSRQVKKRR) show a composition bias toward basic residues. 4 positions are modified to phosphoserine: Ser-252, Ser-254, Ser-256, and Ser-261. Residues 263–273 (VEFKPDTKQEG) show a composition bias toward basic and acidic residues. At Thr-269 the chain carries Phosphothreonine. Phosphoserine is present on residues Ser-274, Ser-275, Ser-279, and Ser-280. The span at 329–351 (LSETKSTLSAFSAPQNSESQTHV) shows a compositional bias: polar residues. Phosphothreonine is present on Thr-487. Position 503 is an N6-acetyllysine (Lys-503). Residues Ser-827 and Ser-932 each carry the phosphoserine modification. The residue at position 1007 (Thr-1007) is a Phosphothreonine. 1132 to 1139 (GPNMGGKS) serves as a coordination point for ATP.

It belongs to the DNA mismatch repair MutS family. Component of the DNA mismatch repair (MMR) complex composed at least of MSH2, MSH3, MSH6, PMS1 and MLH1. Heterodimer consisting of MSH2-MSH6 (MutS alpha). Forms a ternary complex with MutL alpha (MLH1-PMS1). Interacts with MCM9. Part of the BRCA1-associated genome surveillance complex (BASC), which contains BRCA1, MSH2, MSH6, MLH1, ATM, BLM, PMS2 and the RAD50-MRE11-NBS1 protein complex. This association could be a dynamic process changing throughout the cell cycle and within subnuclear domains. Phosphorylated by PRKCZ, which may prevent MutS alpha degradation by the ubiquitin-proteasome pathway.

The protein localises to the nucleus. It is found in the chromosome. In terms of biological role, component of the post-replicative DNA mismatch repair system (MMR). Heterodimerizes with MSH2 to form MutS alpha, which binds to DNA mismatches thereby initiating DNA repair. When bound, MutS alpha bends the DNA helix and shields approximately 20 base pairs, and recognizes single base mismatches and dinucleotide insertion-deletion loops (IDL) in the DNA. After mismatch binding, forms a ternary complex with the MutL alpha heterodimer, which is thought to be responsible for directing the downstream MMR events, including strand discrimination, excision, and resynthesis. ATP binding and hydrolysis play a pivotal role in mismatch repair functions. The ATPase activity associated with MutS alpha regulates binding similar to a molecular switch: mismatched DNA provokes ADP--&gt;ATP exchange, resulting in a discernible conformational transition that converts MutS alpha into a sliding clamp capable of hydrolysis-independent diffusion along the DNA backbone. This transition is crucial for mismatch repair. MutS alpha may also play a role in DNA homologous recombination repair. Recruited on chromatin in G1 and early S phase via its PWWP domain that specifically binds trimethylated 'Lys-36' of histone H3 (H3K36me3): early recruitment to chromatin to be replicated allowing a quick identification of mismatch repair to initiate the DNA mismatch repair reaction. The protein is DNA mismatch repair protein Msh6 of Mus musculus (Mouse).